A 328-amino-acid chain; its full sequence is tRNA uridine(34) hydroxylase (328 aa).

The region spanning leucine 130–glutamate 224 is the Rhodanese domain. Catalysis depends on cysteine 184, which acts as the Cysteine persulfide intermediate.

Belongs to the TrhO family.

It carries out the reaction uridine(34) in tRNA + AH2 + O2 = 5-hydroxyuridine(34) in tRNA + A + H2O. In terms of biological role, catalyzes oxygen-dependent 5-hydroxyuridine (ho5U) modification at position 34 in tRNAs. This chain is tRNA uridine(34) hydroxylase, found in Streptococcus pyogenes serotype M6 (strain ATCC BAA-946 / MGAS10394).